The chain runs to 550 residues: Arginine--tRNA ligase (550 aa).

Residues 123-133 (ANPTGYLHIAH) carry the 'HIGH' region motif.

This sequence belongs to the class-I aminoacyl-tRNA synthetase family. As to quaternary structure, monomer.

It is found in the cytoplasm. It catalyses the reaction tRNA(Arg) + L-arginine + ATP = L-arginyl-tRNA(Arg) + AMP + diphosphate. This is Arginine--tRNA ligase from Ureaplasma parvum serovar 3 (strain ATCC 27815 / 27 / NCTC 11736).